A 297-amino-acid polypeptide reads, in one-letter code: Protoheme IX farnesyltransferase 1 (297 aa).

Helical transmembrane passes span V23 to V43, W45 to V65, L93 to F113, L117 to L137, I145 to G165, P171 to I191, L216 to H236, L241 to Y261, and I277 to L297.

This sequence belongs to the UbiA prenyltransferase family. Protoheme IX farnesyltransferase subfamily.

Its subcellular location is the cell inner membrane. The catalysed reaction is heme b + (2E,6E)-farnesyl diphosphate + H2O = Fe(II)-heme o + diphosphate. Its pathway is porphyrin-containing compound metabolism; heme O biosynthesis; heme O from protoheme: step 1/1. In terms of biological role, converts heme B (protoheme IX) to heme O by substitution of the vinyl group on carbon 2 of heme B porphyrin ring with a hydroxyethyl farnesyl side group. The sequence is that of Protoheme IX farnesyltransferase 1 from Pseudomonas putida (strain W619).